A 208-amino-acid polypeptide reads, in one-letter code: MEIKLIDKNGRPAKAGLAVSEATFGREFNEALVHQVVVAYQANARTATRAQLTRAEVSHTTKKPWNQKGTGRARAGMSSSTIWRGGGRAFPNTPDENFSHKINRKAYRAGVRSILSELVRQDRLSAVEEFAVDTPKTKQLVEKIKGLGYNEGLLVLVDKFDENLYLSARNLPHVLVLEAQYVDPVSLVRFPQVLATAGAVKKLEEMLA.

The segment at 54–78 (RAEVSHTTKKPWNQKGTGRARAGMS) is disordered.

It belongs to the universal ribosomal protein uL4 family. As to quaternary structure, part of the 50S ribosomal subunit.

In terms of biological role, one of the primary rRNA binding proteins, this protein initially binds near the 5'-end of the 23S rRNA. It is important during the early stages of 50S assembly. It makes multiple contacts with different domains of the 23S rRNA in the assembled 50S subunit and ribosome. Forms part of the polypeptide exit tunnel. The sequence is that of Large ribosomal subunit protein uL4 from Methylobacillus flagellatus (strain ATCC 51484 / DSM 6875 / VKM B-1610 / KT).